The primary structure comprises 132 residues: Profilin (132 aa).

It belongs to the profilin family. Occurs in many kinds of cells as a complex with monomeric actin in a 1:1 ratio.

The protein localises to the cytoplasm. It localises to the cytoskeleton. Functionally, binds to actin and affects the structure of the cytoskeleton. At high concentrations, profilin prevents the polymerization of actin, whereas it enhances it at low concentrations. By binding to PIP2, it inhibits the formation of IP3 and DG. The sequence is that of Profilin from Naegleria pringsheimi (Amoeba).